Here is a 398-residue protein sequence, read N- to C-terminus: MVFNKKTIEDVDVKGKRVLVRCDFNVPLQEGKITDENRLIGSLPTIKYLMENNAKVILCSHLGKPKGEVKPEMSLLPVAKRLSELLKKEVVFAADDNVVGENAKAAVKNMKDGDVILLQNTRYRIEETKNQDNFSKELASLGEIFVNDAFGTAHRAHCSTVGVTKFLPTAVCGYLIQKELEFLGNAIENPSRPFTAILGGVKVSDKINVINNLLEKVDTLIIGGGMSYTFARAQGYTIGTSVVEEDKIEYAKEMIDKAKEKGIKLLLPIDRVVTDKFDESAEPILEDDKNIKDGYMGMDIGPKTAKVYADAIKDSKTIIWNGPMGVFEFKNFAKGTFAVAKAMAESGAITIIGGGDSAAAINQLGFGDKMTHISTGGGASLEFLGGEELPGISALNNK.

Substrate is bound by residues 23–25 (DFN), Arg-38, 61–64 (HLGK), Arg-122, and Arg-155. Residues Lys-206, Gly-297, Glu-328, and 354–357 (GGDS) each bind ATP.

Belongs to the phosphoglycerate kinase family. In terms of assembly, monomer.

Its subcellular location is the cytoplasm. The enzyme catalyses (2R)-3-phosphoglycerate + ATP = (2R)-3-phospho-glyceroyl phosphate + ADP. Its pathway is carbohydrate degradation; glycolysis; pyruvate from D-glyceraldehyde 3-phosphate: step 2/5. In Clostridium kluyveri (strain NBRC 12016), this protein is Phosphoglycerate kinase.